A 126-amino-acid polypeptide reads, in one-letter code: 13 kDa ribonucleoprotein-associated protein (126 aa).

It belongs to the eukaryotic ribosomal protein eL8 family. Component of the U3 snoRNP particle. Binds to the C'/D and B/C motifs in U3 snoRNA. Component of the 25S U4/U6.U5 tri-snRNP particle, a subcomplex of the spliceosome. Binds to the 5' stem-loop of U4 snRNA.

The protein resides in the nucleus. Its subcellular location is the nucleolus. In terms of biological role, common component of the spliceosome and rRNA processing machinery. In association with the spliceosomal U4/U6.U5 tri-snRNP particle, required for splicing of pre-mRNA. In association with box C/D snoRNPs, required for processing of pre-ribosomal RNA (rRNA) and site-specific 2'-O-methylation of substrate RNAs. Essential for the accumulation and stability of U4 snRNA, U6 snRNA, and box C/D snoRNAs. The polypeptide is 13 kDa ribonucleoprotein-associated protein (SNU13) (Mycosarcoma maydis (Corn smut fungus)).